The primary structure comprises 756 residues: Serine/threonine-protein kinase CBK1 (756 aa).

2 disordered regions span residues 1–180 (MYNS…SYSS) and 242–261 (QQQQ…NNGT). Residues 23-34 (QQQDQQHQQQQQ) are compositionally biased toward low complexity. Over residues 53–77 (FSSNYMKEQGSHQSLQEHLQRETGN) the composition is skewed to polar residues. At Thr109 the chain carries Phosphothreonine. Over residues 120 to 180 (HNNNSQSMVQ…TLRSNGSYSS (61 aa)) the composition is skewed to polar residues. Residues 242–255 (QQQQQQQSQSPVQS) show a composition bias toward low complexity. Residues 352–672 (FHTVKVIGKG…ADEIKSHPFF (321 aa)) enclose the Protein kinase domain. Residues 358-366 (IGKGAFGEV) and Lys381 each bind ATP. Residue Asp475 is the Proton acceptor of the active site. The 82-residue stretch at 673–754 (RGVDWNTIRQ…SRFDYLTRKN (82 aa)) folds into the AGC-kinase C-terminal domain. Positions 707 to 732 (NVPDSPAMAQAAKQREQMTKQGGSAP) are disordered.

This sequence belongs to the protein kinase superfamily. STE Ser/Thr protein kinase family. COT1 subfamily. Associates with PAG1/TAO3 and interacts with MOB2.

It carries out the reaction L-seryl-[protein] + ATP = O-phospho-L-seryl-[protein] + ADP + H(+). It catalyses the reaction L-threonyl-[protein] + ATP = O-phospho-L-threonyl-[protein] + ADP + H(+). Protein kinase that seems to play a role in the regulation of cell morphogenesis and proliferation. The polypeptide is Serine/threonine-protein kinase CBK1 (CBK1) (Saccharomyces cerevisiae (strain ATCC 204508 / S288c) (Baker's yeast)).